The sequence spans 414 residues: 26S proteasome regulatory subunit 8 homolog (414 aa).

ATP is bound at residue 197–204 (GPPGTGKT).

This sequence belongs to the AAA ATPase family.

The protein localises to the cytoplasm. It localises to the nucleus. Its function is as follows. The 26S proteasome is involved in the ATP-dependent degradation of ubiquitinated proteins. The regulatory (or ATPase) complex confers ATP dependency and substrate specificity to the 26S complex. This is 26S proteasome regulatory subunit 8 homolog from Naegleria fowleri (Brain eating amoeba).